Consider the following 525-residue polypeptide: Cytochrome P450 4V2 (525 aa).

The chain crosses the membrane as a helical span at residues 13 to 33 (LLLWGAASALSLAGASLVLSL). Residues Glu329 and Cys467 each coordinate heme.

This sequence belongs to the cytochrome P450 family. It depends on heme as a cofactor. As to expression, broadly expressed. Detected in heart, brain, placenta, lung, liver, skeletal muscle, kidney, pancreas, retina, retinal pigment epithelium (RPE) and lymphocytes.

The protein localises to the endoplasmic reticulum membrane. The enzyme catalyses dodecanoate + reduced [NADPH--hemoprotein reductase] + O2 = 12-hydroxydodecanoate + oxidized [NADPH--hemoprotein reductase] + H2O + H(+). It catalyses the reaction tetradecanoate + reduced [NADPH--hemoprotein reductase] + O2 = 14-hydroxytetradecanoate + oxidized [NADPH--hemoprotein reductase] + H2O + H(+). The catalysed reaction is hexadecanoate + reduced [NADPH--hemoprotein reductase] + O2 = 16-hydroxyhexadecanoate + oxidized [NADPH--hemoprotein reductase] + H2O + H(+). It carries out the reaction (5Z,8Z,11Z,14Z,17Z)-eicosapentaenoate + reduced [NADPH--hemoprotein reductase] + O2 = 20-hydroxy-(5Z,8Z,11Z,14Z,17Z)-eicosapentaenoate + oxidized [NADPH--hemoprotein reductase] + H2O + H(+). The enzyme catalyses (4Z,7Z,10Z,13Z,16Z,19Z)-docosahexaenoate + reduced [NADPH--hemoprotein reductase] + O2 = 22-hydroxy-(4Z,7Z,10Z,13Z,16Z,19Z)-docosahexaenoate + oxidized [NADPH--hemoprotein reductase] + H2O + H(+). Its pathway is lipid metabolism; fatty acid metabolism. With respect to regulation, inhibited by N-hydroxy-N'-(4-n-butyl-2-methylphenyl formamidine)(HET0016) with an IC(50) of 38 nM. In terms of biological role, a cytochrome P450 monooxygenase involved in fatty acid metabolism in the eye. Catalyzes the omega-hydroxylation of polyunsaturated fatty acids (PUFAs) docosahexaenoate (DHA) and its precursor eicosapentaenoate (EPA), and may contribute to the homeostasis of these retinal PUFAs. Omega hydroxylates saturated fatty acids such as laurate, myristate and palmitate, the catalytic efficiency decreasing in the following order: myristate &gt; laurate &gt; palmitate (C14&gt;C12&gt;C16). Mechanistically, uses molecular oxygen inserting one oxygen atom into a substrate, and reducing the second into a water molecule, with two electrons provided by NADPH via cytochrome P450 reductase (CPR; NADPH-ferrihemoprotein reductase). The sequence is that of Cytochrome P450 4V2 (CYP4V2) from Homo sapiens (Human).